The chain runs to 234 residues: Leucyl/phenylalanyl-tRNA--protein transferase (234 aa).

Belongs to the L/F-transferase family.

It is found in the cytoplasm. The enzyme catalyses N-terminal L-lysyl-[protein] + L-leucyl-tRNA(Leu) = N-terminal L-leucyl-L-lysyl-[protein] + tRNA(Leu) + H(+). It catalyses the reaction N-terminal L-arginyl-[protein] + L-leucyl-tRNA(Leu) = N-terminal L-leucyl-L-arginyl-[protein] + tRNA(Leu) + H(+). The catalysed reaction is L-phenylalanyl-tRNA(Phe) + an N-terminal L-alpha-aminoacyl-[protein] = an N-terminal L-phenylalanyl-L-alpha-aminoacyl-[protein] + tRNA(Phe). Its function is as follows. Functions in the N-end rule pathway of protein degradation where it conjugates Leu, Phe and, less efficiently, Met from aminoacyl-tRNAs to the N-termini of proteins containing an N-terminal arginine or lysine. The chain is Leucyl/phenylalanyl-tRNA--protein transferase from Hahella chejuensis (strain KCTC 2396).